A 446-amino-acid polypeptide reads, in one-letter code: MDLQIDQKIINELLNERDYFDTNETYYCIVDQQHVIDLYQKDLTESIISDNIQKDGYFFTDINTVLDFIANGEFLLQLKVPSKNHELVVISVESGWKSNMILMDSIYCLDSISTFEFLYKKNIDHNKLVSLARKYLNSEMLDFLIDKGLRMRPNLKYISDWATITNNPLESRFNSKLLSRIPFLAVTDTLPGQNNGICIINNVILTDIENLFCELSKGKFVLEVLIPVNEFDKKILMNFNSKGKVWVSEVYCVGYQNLDDISILQHLIALGCNKMHVLLFTIKSHRESSTTMLLSNYVFDKIELEYALCIAAVSGNFNVFSSIINTVKNSYYTTEQKISSLINLDLILREEVNLPVRINYTPTTYTDIILVLAVIGGSVEIICLLLKYFYQQIIDNYHILTKYSIMYENGDMMDLLRNIYKGFYSNFQTNNESDSLFNKNILKTDN.

ANK repeat units lie at residues 71–100 (NGEF…KSNM), 124–153 (DHNK…RMRP), 206–237 (TDIE…KILM), 245–277 (VWVS…KMHV), 303–332 (ELEY…NSYY), and 365–394 (YTDI…QQII).

The polypeptide is Putative ankyrin repeat protein L273 (Acanthamoeba polyphaga (Amoeba)).